Consider the following 107-residue polypeptide: Somatoliberin (107 aa).

The signal sequence occupies residues 1-19 (MPLWVFFVILTLTNGSHCS). Residues 20–30 (PSPSLPFRIRR) constitute a propeptide that is removed on maturation. At leucine 74 the chain carries Leucine amide. A propeptide spanning residues 77 to 107 (QVDSMWADHRQMSLESLLAALLQKHSRDSQG) is cleaved from the precursor.

The protein belongs to the glucagon family.

It is found in the secreted. GRF is released by the hypothalamus and acts on the adenohypophyse to stimulate the secretion of growth hormone. This chain is Somatoliberin (GHRH), found in Mesocricetus auratus (Golden hamster).